The sequence spans 211 residues: Transcriptional regulatory protein LiaR (211 aa).

A Response regulatory domain is found at 3–119; the sequence is RVLLIDDHEM…EIADAIRAAS (117 aa). 4-aspartylphosphate is present on D54. The region spanning 143–208 is the HTH luxR-type domain; sequence NALPHESLTK…QAAVYAHRNH (66 aa). A DNA-binding region (H-T-H motif) is located at residues 167 to 186; it reads NKEIGEELFITIKTVKTHIT.

Post-translationally, phosphorylated by LiaS.

Its subcellular location is the cytoplasm. Its function is as follows. Member of the two-component regulatory system LiaS/LiaR probably involved in response to a subset of cell wall-active antibiotics that interfere with the lipid II cycle in the cytoplasmic membrane (bacitracin, nisin, ramoplanin and vancomycin). Also seems to be involved in response to cationic antimicrobial peptides and secretion stress. LiaR regulates the transcription of the liaIHGFSR operon. The sequence is that of Transcriptional regulatory protein LiaR (liaR) from Bacillus subtilis (strain 168).